The primary structure comprises 176 residues: Large ribosomal subunit protein uL16 (176 aa).

Belongs to the universal ribosomal protein uL16 family.

This is Large ribosomal subunit protein uL16 from Thermoplasma acidophilum (strain ATCC 25905 / DSM 1728 / JCM 9062 / NBRC 15155 / AMRC-C165).